We begin with the raw amino-acid sequence, 239 residues long: Probable transcriptional regulatory protein YeeI (239 aa).

The protein belongs to the TACO1 family. YeeN subfamily.

It is found in the cytoplasm. The protein is Probable transcriptional regulatory protein YeeI (yeeI) of Bacillus subtilis (strain 168).